The chain runs to 272 residues: Exosome complex component Rrp42 (272 aa).

The protein belongs to the RNase PH family. Rrp42 subfamily. In terms of assembly, component of the archaeal exosome complex. Forms a hexameric ring-like arrangement composed of 3 Rrp41-Rrp42 heterodimers. The hexameric ring associates with a trimer of Rrp4 and/or Csl4 subunits.

The protein resides in the cytoplasm. Functionally, non-catalytic component of the exosome, which is a complex involved in RNA degradation. Contributes to the structuring of the Rrp41 active site. The chain is Exosome complex component Rrp42 from Thermococcus kodakarensis (strain ATCC BAA-918 / JCM 12380 / KOD1) (Pyrococcus kodakaraensis (strain KOD1)).